The chain runs to 380 residues: GPI-anchor transamidase (380 aa).

An N-terminal signal peptide occupies residues 1–19 (MIVQFVALLLLNLLQIIAA). Over 20–354 (ESSHTNNWAV…TRELKYKKHP (335 aa)) the chain is Lumenal. Residues His-145 and Cys-187 contribute to the active site. Asn-307 carries N-linked (GlcNAc...) asparagine glycosylation. A helical membrane pass occupies residues 355-375 (ISRIISAVVCISFSIGFPYYA). The Cytoplasmic portion of the chain corresponds to 376 to 380 (SKYLK).

Belongs to the peptidase C13 family. In terms of assembly, forms a complex with PIG-T homolog, PIG-U homolog and PIG-S homolog. Post-translationally, the disulfide bond between PIGK/GPI8 and PIGT is important for normal enzyme activity.

The protein resides in the endoplasmic reticulum membrane. The protein operates within glycolipid biosynthesis; glycosylphosphatidylinositol-anchor biosynthesis. Its function is as follows. Mediates GPI anchoring in the endoplasmic reticulum, by replacing a protein's C-terminal GPI attachment signal peptide with a pre-assembled GPI. During this transamidation reaction, the GPI transamidase forms a carbonyl intermediate with the substrate protein. The polypeptide is GPI-anchor transamidase (gpi8) (Schizosaccharomyces pombe (strain 972 / ATCC 24843) (Fission yeast)).